The sequence spans 421 residues: ATP-dependent RNA helicase eIF4A (421 aa).

The interval 1–26 is disordered; the sequence is MSNDKGLEEIPEDQSTTPHKPTSNVG. Over residues 13–26 the composition is skewed to polar residues; the sequence is DQSTTPHKPTSNVG. The Q motif signature appears at 48 to 76; it reads DSFDAMELKPELLRGVYAYGFERPSAIQQ. The Helicase ATP-binding domain occupies 79–249; the sequence is IKPIIKGSDV…TKFMRDPVRI (171 aa). 92 to 99 contributes to the ATP binding site; it reads AQSGTGKT. The DEAD box signature appears at 197–200; the sequence is DEAD. Residues 260-421 enclose the Helicase C-terminal domain; sequence GIKQFYIAVE…EMPMNVADLI (162 aa).

It belongs to the DEAD box helicase family. eIF4A subfamily. Component of the eIF4F complex, which composition varies with external and internal environmental conditions. It is composed of at least eIF4A, eIF4E and eIF4G.

It is found in the cytoplasm. It catalyses the reaction ATP + H2O = ADP + phosphate + H(+). Functionally, ATP-dependent RNA helicase which is a subunit of the eIF4F complex involved in cap recognition and is required for mRNA binding to ribosome. In the current model of translation initiation, eIF4A unwinds RNA secondary structures in the 5'-UTR of mRNAs which is necessary to allow efficient binding of the small ribosomal subunit, and subsequent scanning for the initiator codon. The polypeptide is ATP-dependent RNA helicase eIF4A (tif1) (Aspergillus oryzae (strain ATCC 42149 / RIB 40) (Yellow koji mold)).